Consider the following 663-residue polypeptide: UvrABC system protein B (663 aa).

In terms of domain architecture, Helicase ATP-binding spans 30–417; the sequence is EGIKAGKRHQ…TDKMVEQIIR (388 aa). ATP is bound at residue 43–50; sequence GATGTGKT. The short motif at 96 to 119 is the Beta-hairpin element; that stretch reads YYDYYQPEAYVPSTDTFIEKDASI. In terms of domain architecture, Helicase C-terminal spans 434–600; the sequence is QIDDLLSEIQ…TINKKIHDLI (167 aa). A UVR domain is found at 627-662; that stretch reads QKTIDNIEKEMKQAAKDLDFEKATELRDMLFELKAE.

This sequence belongs to the UvrB family. Forms a heterotetramer with UvrA during the search for lesions. Interacts with UvrC in an incision complex.

It localises to the cytoplasm. Functionally, the UvrABC repair system catalyzes the recognition and processing of DNA lesions. A damage recognition complex composed of 2 UvrA and 2 UvrB subunits scans DNA for abnormalities. Upon binding of the UvrA(2)B(2) complex to a putative damaged site, the DNA wraps around one UvrB monomer. DNA wrap is dependent on ATP binding by UvrB and probably causes local melting of the DNA helix, facilitating insertion of UvrB beta-hairpin between the DNA strands. Then UvrB probes one DNA strand for the presence of a lesion. If a lesion is found the UvrA subunits dissociate and the UvrB-DNA preincision complex is formed. This complex is subsequently bound by UvrC and the second UvrB is released. If no lesion is found, the DNA wraps around the other UvrB subunit that will check the other stand for damage. This is UvrABC system protein B from Staphylococcus aureus (strain COL).